A 474-amino-acid polypeptide reads, in one-letter code: Synaptotagmin-17 (474 aa).

The tract at residues 60 to 112 is disordered; sequence WLMASRSSDKDGDSVHTASEVPLTPRTNSPDGRRSSSDTSKSTYSLTRRISSL. Low complexity predominate over residues 96 to 112; that stretch reads SDTSKSTYSLTRRISSL. Ser118 and Ser119 each carry phosphoserine. C2 domains follow at residues 184–310 and 321–455; these read QLGM…HWWK and ELGE…EQWH.

This sequence belongs to the synaptotagmin family. As to expression, expressed abundantly in brain (frontal and temporal lobes, hippocampus, hypothalamus, amygdala, substantia nigra, and pituitary), kidney, and prostate. Expressed in fetal brain, kidney and lung. Expressed in melanocytes.

The protein localises to the membrane. Its function is as follows. Plays a role in dendrite formation by melanocytes. The polypeptide is Synaptotagmin-17 (SYT17) (Homo sapiens (Human)).